A 106-amino-acid polypeptide reads, in one-letter code: uncharacterized protein (106 aa).

Belongs to the SUI1 family.

This is an uncharacterized protein from Haemophilus influenzae (strain ATCC 51907 / DSM 11121 / KW20 / Rd).